Consider the following 225-residue polypeptide: NAD(P)H-quinone oxidoreductase subunit K, chloroplastic (225 aa).

The [4Fe-4S] cluster site is built by Cys-43, Cys-44, Cys-108, and Cys-139.

Belongs to the complex I 20 kDa subunit family. NDH is composed of at least 16 different subunits, 5 of which are encoded in the nucleus. Requires [4Fe-4S] cluster as cofactor.

The protein localises to the plastid. The protein resides in the chloroplast thylakoid membrane. It carries out the reaction a plastoquinone + NADH + (n+1) H(+)(in) = a plastoquinol + NAD(+) + n H(+)(out). It catalyses the reaction a plastoquinone + NADPH + (n+1) H(+)(in) = a plastoquinol + NADP(+) + n H(+)(out). In terms of biological role, NDH shuttles electrons from NAD(P)H:plastoquinone, via FMN and iron-sulfur (Fe-S) centers, to quinones in the photosynthetic chain and possibly in a chloroplast respiratory chain. The immediate electron acceptor for the enzyme in this species is believed to be plastoquinone. Couples the redox reaction to proton translocation, and thus conserves the redox energy in a proton gradient. The chain is NAD(P)H-quinone oxidoreductase subunit K, chloroplastic from Lolium perenne (Perennial ryegrass).